The sequence spans 85 residues: Cell division topological specificity factor (85 aa).

It belongs to the MinE family.

Its function is as follows. Prevents the cell division inhibition by proteins MinC and MinD at internal division sites while permitting inhibition at polar sites. This ensures cell division at the proper site by restricting the formation of a division septum at the midpoint of the long axis of the cell. This chain is Cell division topological specificity factor, found in Shewanella oneidensis (strain ATCC 700550 / JCM 31522 / CIP 106686 / LMG 19005 / NCIMB 14063 / MR-1).